The following is a 358-amino-acid chain: GTPase Obg (358 aa).

In terms of domain architecture, Obg spans 1-158 (MFVDNVDIYV…RHVRLELKLI (158 aa)). Residues 159–355 (ADVGLVGFPN…LKYLLHESVR (197 aa)) form the OBG-type G domain. Residues 165–172 (GFPNVGKS), 190–194 (FTTLI), 212–215 (DIPG), 280–283 (SKVD), and 336–338 (SSA) each bind GTP. 2 residues coordinate Mg(2+): Ser172 and Thr192.

It belongs to the TRAFAC class OBG-HflX-like GTPase superfamily. OBG GTPase family. Monomer. Mg(2+) serves as cofactor.

It localises to the cytoplasm. In terms of biological role, an essential GTPase which binds GTP, GDP and possibly (p)ppGpp with moderate affinity, with high nucleotide exchange rates and a fairly low GTP hydrolysis rate. Plays a role in control of the cell cycle, stress response, ribosome biogenesis and in those bacteria that undergo differentiation, in morphogenesis control. This chain is GTPase Obg, found in Wolinella succinogenes (strain ATCC 29543 / DSM 1740 / CCUG 13145 / JCM 31913 / LMG 7466 / NCTC 11488 / FDC 602W) (Vibrio succinogenes).